The chain runs to 378 residues: Stimulator of interferon genes protein (378 aa).

Residues 1–17 (MPHSSLHPSIPQPRGLR) lie on the Cytoplasmic side of the membrane. A mediates interaction with ZDHHC1 and ZDHHC11 region spans residues 1 to 190 (MPHSSLHPSI…IYNQFHNNTL (190 aa)). Residues 18-34 (AQKAALVLLSACLVALW) form a helical membrane-spanning segment. Residues 35–44 (GLGEPPDYTL) are Lumenal-facing. A helical membrane pass occupies residues 45–69 (KWLVLHLASQQMGLLIKGICSLAEE). At 70 to 91 (LCHVHSRYHGSYWRAVRACLCS) the chain is on the cytoplasmic side. C88 carries S-palmitoyl cysteine lipidation. Residues 92-106 (SMRCGALLLLSCYFY) form a helical membrane-spanning segment. The Lumenal segment spans residues 107–116 (CSLPNMADLP). The chain crosses the membrane as a helical span at residues 117-134 (FTWMLALLGLSQALNILL). Residues 135–378 (GLQGLAPAEV…KPLPLRSDVF (244 aa)) lie on the Cytoplasmic side of the membrane. A Glycyl lysine isopeptide (Lys-Gly) (interchain with G-Cter in ubiquitin) cross-link involves residue K150. Residues 153 to 339 (FNVAHGLAWS…LQHLRQEERE (187 aa)) form a cyclic dinucleotide-binding domain (CBD) region. 2 residues coordinate 2',3'-cGAMP: S162 and Y167. Residues S162 and Y167 each contribute to the 3',3'-c-di-GMP site. A 2',3'-cUAMP-binding site is contributed by Y167. Residue K236 forms a Glycyl lysine isopeptide (Lys-Gly) (interchain with G-Cter in ubiquitin) linkage. 2',3'-cGAMP is bound by residues R238 and T263. The 2',3'-cUAMP site is built by R238 and T263. Residues 238-241 (RVYT) and T263 each bind 3',3'-c-di-GMP. The C-terminal tail (CTT) stretch occupies residues 339-378 (EVTMGSTETSVMPGSSVLSQEPELLISGLEKPLPLRSDVF). S354 carries the post-translational modification Phosphoserine. 2 positions are modified to phosphoserine; by TBK1: S357 and S365. The pLxIS motif motif lies at 362–365 (LLIS).

This sequence belongs to the STING family. In terms of assembly, homodimer; forms a homodimer in absence of cyclic nucleotide (c-di-GMP or cGAMP); 'Lys-63'-linked ubiquitination at Lys-150 is required for homodimerization. Homotetramer; in presence of cyclic nucleotide (c-di-GMP or cGAMP), forms tetramers and higher-order oligomers through side-by-side packing. Interacts (when phosphorylated) with IRF3; following activation and phosphorylation on the pLxIS motif by TBK1, recruits IRF3. Interacts with RIGI, MAVS and SSR2. Interacts with RNF5 and TRIM56. Interacts with TBK1; when homodimer, leading to subsequent production of IFN-beta. Interacts with IFIT1 and IFIT2. Interacts with TRIM29; this interaction induces STING1 ubiquitination and subsequent degradation. Associates with the MHC-II complex. Interacts with STEEP1; interaction takes place upon cGAMP-activation and STING1 phosphorylation by MAP3K7/TAK1 and promotes STING1 translocation to COPII vesicles. Interacts with SEC24A, SEC24B and SEC24C; promoting translocation to COPII vesicles. Interacts (when ubiquitinated) with SQSTM1; leading to relocalization to autophagosomes. Interacts with SURF4. Interacts with HNRNPA2B1. Interacts with ZDHHC1; ZDHHC1 constitutively interacts with STING1 and in presence of DNA viruses activates it by promoting its cGAMP-induced oligomerization and the recruitment of downstream signaling components. Interacts with ZDHHC11; in presence of DNA viruses promotes the recruitment of IRF3 to STING1. Interacts with TOMM70. Interacts with TAB1; promoting recruitment of TAB1 to the endoplasmic reticulum membrane and subsequent activation of MAP3K7/TAK1. Interacts (via transmembrane domain) with TMEM203. Interacts with DDX41. Phosphorylation by TBK1 leads to activation and production of IFN-beta. Following cyclic nucleotide (c-di-GMP or cGAMP)-binding, activation and translocation from the endoplasmic reticulum, STING1 is phosphorylated by TBK1 at Ser-365 in the pLxIS motif. The phosphorylated pLxIS motif constitutes an IRF3-binding motif, leading to recruitment of the transcription factor IRF3 to induce type-I interferons and other cytokines. Phosphorylated on tyrosine residues upon MHC-II aggregation. Dephosphorylation by PPP6C leads to inactivation and decreased production of IFN-beta. Phosphorylation at Ser-357 is also required to activate IRF3. Phosphorylation at Ser-354 by MAP3K7/TAK1 facilitates its interaction with STEEP1, promoting STING1 translocation to COPII vesicles. Post-translationally, ubiquitinated. Ubiquitinated via 'Lys-63'-linked ubiquitin chains in response to double-stranded DNA treatment, leading to relocalization to autophagosomes and subsequent degradation; this process is dependent on SQSTM1. 'Lys-63'-linked ubiquitination mediated by TRIM56 at Lys-150 promotes homodimerization and recruitment of the antiviral kinase TBK1 and subsequent production of IFN-beta. 'Lys-48'-linked polyubiquitination at Lys-150 occurring after viral infection is mediated by RNF5 and leads to proteasomal degradation. 'Lys-11'-linked polyubiquitination at Lys-150 by RNF26 leads to stabilize STING1: it protects STING1 from RNF5-mediated 'Lys-48'-linked polyubiquitination. 'Lys-33'-linked and 'Lys-48'-linked deubiquitinated by USP20; leading to its stabilization and promotion of innate antiviral response. 'Lys-48'-linked deubiquitinated by USP44; leading to its stabilization and promotion of innate antiviral response. 'Lys-63'-linked deubiquitinated by USP49; leading to inhibition of the subsequent recruitment of TBK1 to the signaling complex. 'Lys-63'-linked ubiquitination mediated by RNF39 promotes the activation of the cGAS-STING pathway. In terms of processing, palmitoylation takes place in the Golgi apparatus and creates a platform for the recruitment of TBK1.

The protein resides in the endoplasmic reticulum membrane. The protein localises to the cytoplasm. Its subcellular location is the perinuclear region. It is found in the endoplasmic reticulum-Golgi intermediate compartment membrane. It localises to the golgi apparatus membrane. The protein resides in the cytoplasmic vesicle. The protein localises to the autophagosome membrane. Its subcellular location is the mitochondrion outer membrane. It is found in the cell membrane. The enzyme catalyses H(+)(in) = H(+)(out). In terms of biological role, facilitator of innate immune signaling that acts as a sensor of cytosolic DNA from bacteria and viruses and promotes the production of type I interferon (IFN-alpha and IFN-beta). Innate immune response is triggered in response to non-CpG double-stranded DNA from viruses and bacteria delivered to the cytoplasm. Acts by binding cyclic dinucleotides: recognizes and binds cyclic di-GMP (c-di-GMP), a second messenger produced by bacteria, cyclic UMP-AMP (2',3'-cUAMP), and cyclic GMP-AMP (cGAMP), a messenger produced by CGAS in response to DNA virus in the cytosol. Upon binding to c-di-GMP or cGAMP, STING oligomerizes, translocates from the endoplasmic reticulum and is phosphorylated by TBK1 on the pLxIS motif, leading to recruitment and subsequent activation of the transcription factor IRF3 to induce expression of type I interferon and exert a potent anti-viral state. Exhibits 2',3' phosphodiester linkage-specific ligand recognition: can bind both 2'-3' linked cGAMP (2'-3'-cGAMP) and 3'-3' linked cGAMP but is preferentially activated by 2'-3' linked cGAMP. The preference for 2'-3'-cGAMP, compared to other linkage isomers is probably due to the ligand itself, whichs adopts an organized free-ligand conformation that resembles the STING1-bound conformation and pays low energy costs in changing into the active conformation. In addition to promote the production of type I interferons, plays a direct role in autophagy. Following cGAMP-binding, STING1 buds from the endoplasmic reticulum into COPII vesicles, which then form the endoplasmic reticulum-Golgi intermediate compartment (ERGIC). The ERGIC serves as the membrane source for WIPI2 recruitment and LC3 lipidation, leading to formation of autophagosomes that target cytosolic DNA or DNA viruses for degradation by the lysosome. Promotes autophagy by acting as a proton channel that directs proton efflux from the Golgi to facilitate MAP1LC3B/LC3B lipidation. The autophagy- and interferon-inducing activities can be uncoupled and autophagy induction is independent of TBK1 phosphorylation. Autophagy is also triggered upon infection by bacteria: following c-di-GMP-binding, which is produced by live Gram-positive bacteria, promotes reticulophagy. May be involved in translocon function, the translocon possibly being able to influence the induction of type I interferons. May be involved in transduction of apoptotic signals via its association with the major histocompatibility complex class II (MHC-II). This is Stimulator of interferon genes protein from Bos taurus (Bovine).